Consider the following 287-residue polypeptide: 5'-3' exonuclease (287 aa).

The region spanning 172 to 270 (IYPKEFIDLL…ITSEEITLKK (99 aa)) is the 5'-3' exonuclease domain.

5'-3' exonuclease acting preferentially on double-stranded DNA. The chain is 5'-3' exonuclease (pol) from Buchnera aphidicola subsp. Schizaphis graminum (strain Sg).